We begin with the raw amino-acid sequence, 158 residues long: Protein E6 (158 aa).

Zinc fingers lie at residues Cys-32–Cys-68 and Cys-105–Cys-141. The short motif at Thr-156 to Val-158 is the PDZ-binding domain element.

The protein belongs to the papillomaviridae E6 protein family. In terms of assembly, forms homodimers. Interacts with ubiquitin-protein ligase UBE3A/E6-AP; this interaction stimulates UBE3A ubiquitin activity. Interacts with host BAK1.

The protein localises to the host cytoplasm. It is found in the host nucleus. Plays a major role in the induction and maintenance of cellular transformation. E6 associates with host UBE3A/E6-AP ubiquitin-protein ligase and modulates its activity. Protects host keratinocytes from apoptosis by mediating the degradation of host BAK1. May also inhibit host immune response. The sequence is that of Protein E6 from Homo sapiens (Human).